Consider the following 176-residue polypeptide: Thiol-disulfide oxidoreductase ResA (176 aa).

A helical; Signal-anchor for type II membrane protein transmembrane segment spans residues 11–30 (LSILAVISVALGYTFYSNFF). The region spanning 36-176 (ARAGEQAVNF…EFMELIKPEA (141 aa)) is the Thioredoxin domain. Cys74 and Cys77 are oxidised to a cystine.

Belongs to the thioredoxin family. ResA subfamily.

It is found in the cell membrane. It functions in the pathway protein modification; cytochrome c assembly. Thiol-disulfide oxidoreductase which is required in disulfide reduction during c-type cytochrome synthesis. May accept reducing equivalents from CcdA, leading to breakage of disulfide bonds in apocytochrome c; following this reduction heme can be covalently attached. The sequence is that of Thiol-disulfide oxidoreductase ResA from Halalkalibacterium halodurans (strain ATCC BAA-125 / DSM 18197 / FERM 7344 / JCM 9153 / C-125) (Bacillus halodurans).